The primary structure comprises 82 residues: Putative membrane protein insertion efficiency factor (82 aa).

The protein belongs to the UPF0161 family.

Its subcellular location is the cell membrane. In terms of biological role, could be involved in insertion of integral membrane proteins into the membrane. This is Putative membrane protein insertion efficiency factor from Streptococcus thermophilus (strain ATCC BAA-491 / LMD-9).